The chain runs to 708 residues: ABC transporter G family member 18 (708 aa).

In terms of domain architecture, ABC transporter spans 75 to 317; that stretch reads RRRFDFSRRK…FSSFGRPIPE (243 aa). Position 109–116 (109–116) interacts with ATP; the sequence is GGSGAGKS. The ABC transmembrane type-2 domain occupies 402–612; it reads AETFILAKRY…PYEAVLINEF (211 aa). A run of 7 helical transmembrane segments spans residues 421-441, 456-476, 508-528, 537-557, 560-580, 589-609, and 681-701; these read LIGM…TVYW, FFAF…PVFI, LLAL…LSGG, LIIY…SGLI, VMMS…LGGF, LYWI…AVLI, and LWIT…SLLF.

This sequence belongs to the ABC transporter superfamily. ABCG family. Eye pigment precursor importer (TC 3.A.1.204) subfamily.

It is found in the membrane. In Arabidopsis thaliana (Mouse-ear cress), this protein is ABC transporter G family member 18 (ABCG18).